A 182-amino-acid chain; its full sequence is Transcription termination/antitermination protein NusG (182 aa).

Residues 131-161 form the KOW domain; sequence GEVVRVNDGPFADFNGTVEEVDYEKSRLKVS.

Belongs to the NusG family.

Its function is as follows. Participates in transcription elongation, termination and antitermination. The sequence is that of Transcription termination/antitermination protein NusG from Vibrio cholerae serotype O1 (strain ATCC 39315 / El Tor Inaba N16961).